Here is a 448-residue protein sequence, read N- to C-terminus: uncharacterized protein (448 aa).

In terms of domain architecture, uDENN spans 4-155 (QAIVLATFDA…SAVNLEFDSL (152 aa)). Residues 183-326 (LDHLGPAFYC…FKGLSRYLSF (144 aa)) form the cDENN domain. A dDENN domain is found at 328 to 428 (GESSWGLTTY…WQYGKYFWLR (101 aa)). A helical transmembrane segment spans residues 425 to 447 (FWLRRVSLIFLASTCFLFILWKL).

It localises to the golgi apparatus membrane. The protein resides in the endoplasmic reticulum membrane. This is an uncharacterized protein from Schizosaccharomyces pombe (strain 972 / ATCC 24843) (Fission yeast).